The sequence spans 208 residues: Ribonuclease HII (208 aa).

In terms of domain architecture, RNase H type-2 spans 18–208; that stretch reads GFYAGVDEVG…RPVKERLEAC (191 aa). A divalent metal cation is bound by residues D24, E25, and D116.

It belongs to the RNase HII family. Mn(2+) serves as cofactor. Mg(2+) is required as a cofactor.

It is found in the cytoplasm. It carries out the reaction Endonucleolytic cleavage to 5'-phosphomonoester.. Endonuclease that specifically degrades the RNA of RNA-DNA hybrids. The protein is Ribonuclease HII of Shewanella loihica (strain ATCC BAA-1088 / PV-4).